Here is a 396-residue protein sequence, read N- to C-terminus: L-lactate dehydrogenase (396 aa).

In terms of domain architecture, FMN hydroxy acid dehydrogenase spans 1–380 (MIISAASDYR…SRDSLVQELG (380 aa)). Tyr24 serves as a coordination point for substrate. FMN contacts are provided by Ser106 and Gln127. Tyr129 contacts substrate. Thr155 lines the FMN pocket. Arg164 provides a ligand contact to substrate. Lys251 serves as a coordination point for FMN. His275 functions as the Proton acceptor in the catalytic mechanism. Arg278 is a binding site for substrate. 306 to 330 (DSGIRNGLDVVRMIALGADSVLLGR) lines the FMN pocket.

It belongs to the FMN-dependent alpha-hydroxy acid dehydrogenase family. FMN serves as cofactor.

The protein localises to the cell inner membrane. It catalyses the reaction (S)-lactate + A = pyruvate + AH2. Functionally, catalyzes the conversion of L-lactate to pyruvate. Is coupled to the respiratory chain. This chain is L-lactate dehydrogenase, found in Citrobacter koseri (strain ATCC BAA-895 / CDC 4225-83 / SGSC4696).